Reading from the N-terminus, the 124-residue chain is Holo-[acyl-carrier-protein] synthase (124 aa).

Residues aspartate 8 and glutamate 56 each coordinate Mg(2+).

It belongs to the P-Pant transferase superfamily. AcpS family. Mg(2+) serves as cofactor.

Its subcellular location is the cytoplasm. The enzyme catalyses apo-[ACP] + CoA = holo-[ACP] + adenosine 3',5'-bisphosphate + H(+). Functionally, transfers the 4'-phosphopantetheine moiety from coenzyme A to a Ser of acyl-carrier-protein. The sequence is that of Holo-[acyl-carrier-protein] synthase from Maridesulfovibrio salexigens (strain ATCC 14822 / DSM 2638 / NCIMB 8403 / VKM B-1763) (Desulfovibrio salexigens).